Reading from the N-terminus, the 242-residue chain is ATP synthase subunit a (242 aa).

Transmembrane regions (helical) follow at residues Ser-29 to Ser-49, Phe-84 to Ile-104, Ile-114 to Val-134, Phe-140 to Ile-160, Val-189 to Met-209, and Val-210 to Leu-230.

Belongs to the ATPase A chain family. In terms of assembly, F-type ATPases have 2 components, CF(1) - the catalytic core - and CF(0) - the membrane proton channel. CF(1) has five subunits: alpha(3), beta(3), gamma(1), delta(1), epsilon(1). CF(0) has three main subunits: a(1), b(2) and c(9-12). The alpha and beta chains form an alternating ring which encloses part of the gamma chain. CF(1) is attached to CF(0) by a central stalk formed by the gamma and epsilon chains, while a peripheral stalk is formed by the delta and b chains.

Its subcellular location is the cell inner membrane. Functionally, key component of the proton channel; it plays a direct role in the translocation of protons across the membrane. This Rickettsia bellii (strain OSU 85-389) protein is ATP synthase subunit a.